The following is a 613-amino-acid chain: Acetylcholinesterase (613 aa).

A signal peptide spans 1 to 30 (MRPPWCPLHTPSLTPPLLLLLFLIGGGAEA). Asparagine 91 is a glycosylation site (N-linked (GlcNAc...) asparagine). Cysteine 99 and cysteine 126 form a disulfide bridge. Residue serine 233 is the Acyl-ester intermediate of the active site. A disulfide bond links cysteine 287 and cysteine 302. Residue asparagine 295 is glycosylated (N-linked (GlcNAc...) asparagine). The active-site Charge relay system is glutamate 364. Asparagine 380 is a glycosylation site (N-linked (GlcNAc...) asparagine). Cysteine 439 and cysteine 559 form a disulfide bridge. Histidine 477 serves as the catalytic Charge relay system. N-linked (GlcNAc...) asparagine glycosylation occurs at asparagine 494.

It belongs to the type-B carboxylesterase/lipase family. Interacts with PRIMA1. The interaction with PRIMA1 is required to anchor it to the basal lamina of cells and organize into tetramers. Isoform H generates GPI-anchored dimers; disulfide linked. Isoform T generates multiple structures, ranging from monomers and dimers to collagen-tailed and hydrophobic-tailed forms, in which catalytic tetramers are associated with anchoring proteins that attach them to the basal lamina or to cell membranes. In the collagen-tailed forms, isoform T subunits are associated with a specific collagen, COLQ, which triggers the formation of isoform T tetramers, from monomers and dimers.

It is found in the synapse. The protein localises to the secreted. Its subcellular location is the cell membrane. It catalyses the reaction acetylcholine + H2O = choline + acetate + H(+). Its function is as follows. Terminates signal transduction at the neuromuscular junction by rapid hydrolysis of the acetylcholine released into the synaptic cleft. The protein is Acetylcholinesterase (ACHE) of Bos taurus (Bovine).